Reading from the N-terminus, the 963-residue chain is Protein suppressor of white apricot (963 aa).

One copy of the SURP motif 1 repeat lies at 234-276; it reads IIEKTARFIATQGAQMEILIKAKQANNTQFDFLTQGGHLQPYY. Disordered stretches follow at residues 290–322 and 360–430; these read PAPQ…RRNP and EDES…EPPQ. The segment covering 300–317 has biased composition (basic and acidic residues); sequence NTDKEAPSADDHSEEVAG. Polar residues predominate over residues 364–375; it reads SNPGNSQHSGGT. The segment covering 407–418 has biased composition (basic and acidic residues); sequence THEEESSNREQQ. A phosphoserine mark is found at Ser-438, Ser-447, Ser-448, and Ser-450. The disordered stretch occupies residues 445–470; the sequence is NYSSESEEEEDQVQPEKEEEKKPEPV. Basic and acidic residues predominate over residues 458–468; that stretch reads QPEKEEEKKPE. One copy of the SURP motif 2 repeat lies at 483–523; that stretch reads IIDKTATYVIKNGRQFEETLRTKSVDRFSFLLPANEYYPYY. Disordered regions lie at residues 593-613, 634-662, and 716-963; these read PQEA…HVRP, TAGQ…ERVK, and PPES…SSSP. Over residues 637 to 651 the composition is skewed to polar residues; that stretch reads QKGNITASPSCSSPQ. Residue Ser-649 is modified to Phosphoserine. Over residues 652 to 662 the composition is skewed to basic and acidic residues; it reads KEQRQAEERVK. Residues 718-727 show a composition bias toward low complexity; the sequence is ESAAGAATAD. A compositionally biased stretch (acidic residues) spans 768-778; sequence DEEDDDEEDGG. Residues 787-796 show a composition bias toward polar residues; that stretch reads NDDSTNTFTS. A compositionally biased stretch (pro residues) spans 799 to 809; that stretch reads VLPPTAAPPPA. A compositionally biased stretch (low complexity) spans 820 to 830; that stretch reads QLVATTSTRSS. Positions 831–847 are enriched in basic residues; sequence SSRHLKTHRRSRSRSKN. Low complexity predominate over residues 848–858; the sequence is VRSSDSSPSSR. Composition is skewed to basic residues over residues 861–870 and 882–913; these read SRRRRQKSSR and KSQH…RRSR. Ser-912, Ser-914, and Ser-916 each carry phosphoserine. A compositionally biased stretch (basic and acidic residues) spans 934 to 944; that stretch reads AEQRRQQDRRR. Residues 945 to 963 are compositionally biased toward basic residues; sequence TPTKKSHKRHKRRRRSSSP.

It localises to the nucleus speckle. Regulator of pre-mRNA splicing (and, possibly, of other RNA processing events). Regulates its own expression at the level of RNA processing. The sequence is that of Protein suppressor of white apricot (su(w[a])) from Drosophila melanogaster (Fruit fly).